The sequence spans 1478 residues: Bud site selection protein 3 homolog (1478 aa).

3 disordered regions span residues 732–889 (KSKC…PSKG), 1085–1106 (QRDSNLSGDNDADTPLPMHSSN), and 1146–1168 (YSHSHDEEIDSEKRANTKPVSAP). The segment covering 749 to 761 (LVSTNDNSRTLSP) has biased composition (polar residues). Residues 763–777 (TIISRTPRTISTITP) are compositionally biased toward low complexity. Residues 786–800 (GQASNSPARGSISTT) are compositionally biased toward polar residues. Residues 1146–1160 (YSHSHDEEIDSEKRA) show a composition bias toward basic and acidic residues.

The protein belongs to the BUD3 family.

It is found in the cell tip. Its subcellular location is the cell septum. Its function is as follows. Required for proper septum positioning and septum construction during septation. Acts as a landmark to mark sites for future septation, and as part of a scaffold that recruits components of the contractile ring to the site of septation. Not required to determine the site of lateral branch formation. This chain is Bud site selection protein 3 homolog (BUD3), found in Eremothecium gossypii (strain ATCC 10895 / CBS 109.51 / FGSC 9923 / NRRL Y-1056) (Yeast).